A 150-amino-acid chain; its full sequence is Large ribosomal subunit protein uL13 (150 aa).

Positions 129 to 150 (AEHPHAAQQPKPLQLDPAATAQ) are disordered.

The protein belongs to the universal ribosomal protein uL13 family. Part of the 50S ribosomal subunit.

This protein is one of the early assembly proteins of the 50S ribosomal subunit, although it is not seen to bind rRNA by itself. It is important during the early stages of 50S assembly. The sequence is that of Large ribosomal subunit protein uL13 from Synechococcus sp. (strain WH7803).